Reading from the N-terminus, the 430-residue chain is MLDPNLLRTEPDAVAEKLARRGFKLDVDKLRALEERRKVLQVQTENLQAERNSRSKSIGQAKARGEDIEPLRLEVNKLGEQLDAAKSELETLLAEIRDIALAIPNIPHDDVPVGRDENDNVEVSRWGTPRQFDFEVRDHVTLGEMHGGLDFAAAVKLTGSRFVVMKGQLARLHRALAQFMLDLHTEQHGYSENYVPYLVNQDTLYGTGQLPKFAGDLFHTRPLEEEADSSNYALIPTAEVPLTNLVRDEIIDEDDLPIKMTAHTPCFRSEAGSYGRDTRGLIRMHQFDKVEMVQIVRPEDSMVALEEMTGHAEKVLQLLGLPYRKVALCTGDMGFSACKTYDLEVWVPAQNTYREISSCSNVWDFQARRMQARCRSKSDKKTRLVHTLNGSGLAVGRTLVALMENYQQADGRIEIPEILRPYMRGLEYIG.

237 to 239 (TAE) lines the L-serine pocket. 268-270 (RSE) lines the ATP pocket. Glutamate 291 is a binding site for L-serine. An ATP-binding site is contributed by 355–358 (EISS). Serine 391 contacts L-serine.

This sequence belongs to the class-II aminoacyl-tRNA synthetase family. Type-1 seryl-tRNA synthetase subfamily. Homodimer. The tRNA molecule binds across the dimer.

The protein resides in the cytoplasm. It catalyses the reaction tRNA(Ser) + L-serine + ATP = L-seryl-tRNA(Ser) + AMP + diphosphate + H(+). The enzyme catalyses tRNA(Sec) + L-serine + ATP = L-seryl-tRNA(Sec) + AMP + diphosphate + H(+). It participates in aminoacyl-tRNA biosynthesis; selenocysteinyl-tRNA(Sec) biosynthesis; L-seryl-tRNA(Sec) from L-serine and tRNA(Sec): step 1/1. Its function is as follows. Catalyzes the attachment of serine to tRNA(Ser). Is also able to aminoacylate tRNA(Sec) with serine, to form the misacylated tRNA L-seryl-tRNA(Sec), which will be further converted into selenocysteinyl-tRNA(Sec). This is Serine--tRNA ligase from Klebsiella pneumoniae (strain 342).